The following is a 390-amino-acid chain: Period circadian protein (390 aa).

4 disordered regions span residues 27–120 (VTAP…APPV), 164–188 (LEYS…WEGE), 247–266 (GGNG…STNQ), and 327–356 (SPSG…TSQA). Residues 93-114 (GTSGTGNSGDGGGGGGADGTGS) show a composition bias toward gly residues. Residues 247–256 (GGNGNVGSGN) show a composition bias toward gly residues.

As to quaternary structure, forms a heterodimer with timeless (TIM); the complex then translocates into the nucleus. Phosphorylated with a circadian rhythmicity, probably by the double-time protein (dbt). Phosphorylation could be implicated in the stability of per monomer and in the formation of heterodimer per-tim.

The protein resides in the nucleus. Its subcellular location is the cytoplasm. It localises to the perinuclear region. In terms of biological role, essential for biological clock functions. Determines the period length of circadian and ultradian rhythms; an increase in PER dosage leads to shortened circadian rhythms and a decrease leads to lengthened circadian rhythms. Essential for the circadian rhythmicity of locomotor activity, eclosion behavior, and for the rhythmic component of the male courtship song that originates in the thoracic nervous system. The biological cycle depends on the rhythmic formation and nuclear localization of the TIM-PER complex. Light induces the degradation of TIM, which promotes elimination of PER. Nuclear activity of the heterodimer coordinatively regulates PER and TIM transcription through a negative feedback loop. Behaves as a negative element in circadian transcriptional loop. Does not appear to bind DNA, suggesting indirect transcriptional inhibition. The sequence is that of Period circadian protein (per) from Drosophila tropicalis (Fruit fly).